Reading from the N-terminus, the 159-residue chain is Dihydrofolate reductase (159 aa).

Residues 1 to 158 (MISLIAALAV…HSYCFEILER (158 aa)) enclose the DHFR domain. Ile-5 provides a ligand contact to substrate. Residues Ala-7 and 13-19 (VIGMENA) contribute to the NADP(+) site. Asp-27 is a binding site for substrate. NADP(+) is bound at residue 45-46 (HT). Substrate contacts are provided by Arg-52 and Arg-57. Residues 63 to 64 (SS), Lys-76, and 95 to 102 (GGGRVYEQ) contribute to the NADP(+) site. A substrate-binding site is contributed by Thr-113.

It belongs to the dihydrofolate reductase family.

The catalysed reaction is (6S)-5,6,7,8-tetrahydrofolate + NADP(+) = 7,8-dihydrofolate + NADPH + H(+). Its pathway is cofactor biosynthesis; tetrahydrofolate biosynthesis; 5,6,7,8-tetrahydrofolate from 7,8-dihydrofolate: step 1/1. Its function is as follows. Key enzyme in folate metabolism. Catalyzes an essential reaction for de novo glycine and purine synthesis, and for DNA precursor synthesis. The sequence is that of Dihydrofolate reductase (folA) from Escherichia coli O6:H1 (strain CFT073 / ATCC 700928 / UPEC).